A 328-amino-acid chain; its full sequence is Delta-aminolevulinic acid dehydratase (328 aa).

Cys-122, Cys-124, and Cys-132 together coordinate Zn(2+). Lys-197 (schiff-base intermediate with substrate) is an active-site residue. Residues Arg-207 and Arg-219 each contribute to the 5-aminolevulinate site. Residue Glu-235 coordinates Mg(2+). The active-site Schiff-base intermediate with substrate is the Lys-250. 5-aminolevulinate contacts are provided by Ser-276 and Tyr-315.

The protein belongs to the ALAD family. In terms of assembly, homooctamer. Requires Zn(2+) as cofactor.

The enzyme catalyses 2 5-aminolevulinate = porphobilinogen + 2 H2O + H(+). It participates in porphyrin-containing compound metabolism; protoporphyrin-IX biosynthesis; coproporphyrinogen-III from 5-aminolevulinate: step 1/4. Its function is as follows. Catalyzes an early step in the biosynthesis of tetrapyrroles. Binds two molecules of 5-aminolevulinate per subunit, each at a distinct site, and catalyzes their condensation to form porphobilinogen. The sequence is that of Delta-aminolevulinic acid dehydratase (hemB) from Halalkalibacterium halodurans (strain ATCC BAA-125 / DSM 18197 / FERM 7344 / JCM 9153 / C-125) (Bacillus halodurans).